Consider the following 584-residue polypeptide: 2-succinyl-5-enolpyruvyl-6-hydroxy-3-cyclohexene-1-carboxylate synthase (584 aa).

This sequence belongs to the TPP enzyme family. MenD subfamily. As to quaternary structure, homodimer. It depends on Mg(2+) as a cofactor. Mn(2+) serves as cofactor. The cofactor is thiamine diphosphate.

It carries out the reaction isochorismate + 2-oxoglutarate + H(+) = 5-enolpyruvoyl-6-hydroxy-2-succinyl-cyclohex-3-ene-1-carboxylate + CO2. Its pathway is quinol/quinone metabolism; 1,4-dihydroxy-2-naphthoate biosynthesis; 1,4-dihydroxy-2-naphthoate from chorismate: step 2/7. It functions in the pathway quinol/quinone metabolism; menaquinone biosynthesis. In terms of biological role, catalyzes the thiamine diphosphate-dependent decarboxylation of 2-oxoglutarate and the subsequent addition of the resulting succinic semialdehyde-thiamine pyrophosphate anion to isochorismate to yield 2-succinyl-5-enolpyruvyl-6-hydroxy-3-cyclohexene-1-carboxylate (SEPHCHC). The polypeptide is 2-succinyl-5-enolpyruvyl-6-hydroxy-3-cyclohexene-1-carboxylate synthase (Bacillus anthracis).